Here is a 220-residue protein sequence, read N- to C-terminus: Deoxyribose-phosphate aldolase 1 (220 aa).

Catalysis depends on Asp-89, which acts as the Proton donor/acceptor. The active-site Schiff-base intermediate with acetaldehyde is the Lys-151. Lys-180 acts as the Proton donor/acceptor in catalysis.

The protein belongs to the DeoC/FbaB aldolase family. DeoC type 1 subfamily.

The protein resides in the cytoplasm. The catalysed reaction is 2-deoxy-D-ribose 5-phosphate = D-glyceraldehyde 3-phosphate + acetaldehyde. Its pathway is carbohydrate degradation; 2-deoxy-D-ribose 1-phosphate degradation; D-glyceraldehyde 3-phosphate and acetaldehyde from 2-deoxy-alpha-D-ribose 1-phosphate: step 2/2. Functionally, catalyzes a reversible aldol reaction between acetaldehyde and D-glyceraldehyde 3-phosphate to generate 2-deoxy-D-ribose 5-phosphate. This Staphylococcus aureus (strain MRSA252) protein is Deoxyribose-phosphate aldolase 1.